A 553-amino-acid chain; its full sequence is Glycerol kinase 3 (553 aa).

Residue threonine 20 coordinates substrate. Arginine 24 contacts ATP. 3 residues coordinate substrate: arginine 94, tyrosine 148, and aspartate 259. Residues threonine 281, glycine 326, and 427-431 (GMTSN) contribute to the ATP site.

It belongs to the FGGY kinase family.

It localises to the mitochondrion outer membrane. The protein resides in the cytoplasm. The enzyme catalyses glycerol + ATP = sn-glycerol 3-phosphate + ADP + H(+). The protein operates within polyol metabolism; glycerol degradation via glycerol kinase pathway; sn-glycerol 3-phosphate from glycerol: step 1/1. Functionally, may be involved in the regulation of glycerol uptake and metabolism. This chain is Glycerol kinase 3, found in Homo sapiens (Human).